Here is a 502-residue protein sequence, read N- to C-terminus: ATP synthase subunit alpha (502 aa).

169-176 contacts ATP; that stretch reads GDRQTGKT.

It belongs to the ATPase alpha/beta chains family. F-type ATPases have 2 components, CF(1) - the catalytic core - and CF(0) - the membrane proton channel. CF(1) has five subunits: alpha(3), beta(3), gamma(1), delta(1), epsilon(1). CF(0) has three main subunits: a(1), b(2) and c(9-12). The alpha and beta chains form an alternating ring which encloses part of the gamma chain. CF(1) is attached to CF(0) by a central stalk formed by the gamma and epsilon chains, while a peripheral stalk is formed by the delta and b chains.

The protein localises to the cell membrane. It catalyses the reaction ATP + H2O + 4 H(+)(in) = ADP + phosphate + 5 H(+)(out). Its function is as follows. Produces ATP from ADP in the presence of a proton gradient across the membrane. The alpha chain is a regulatory subunit. In Exiguobacterium sp. (strain ATCC BAA-1283 / AT1b), this protein is ATP synthase subunit alpha.